We begin with the raw amino-acid sequence, 311 residues long: MTTVTKHKVLLIAGPTAVGKTALSLALAKQLNGEIISGDSMQVYRHLDIGTAKIMPEEQAGIPHHLIDIKNIDQRFTVAEFVSRTTALIIDISARGKLPIIVGGTGFYLQSLLAGYQFGPADNEPDMAYRQAWFDRAAVEGSDVAWMALKQRDPQAATAIAPANLVRVVRALEYVHTTGQLFSEQADTHGDTLDAYTLCLTAERALLYTRINQRVDQMVAAGLEQEARWLFDQGGAMLPAGKGIGYHEWFPYFNGEQTRDESIAKIKQDSRRYAKRQLTWFRNKMSVDWINLLEHPELRASIDQRLASWLS.

14–21 (GPTAVGKT) is an ATP binding site. 16–21 (TAVGKT) contributes to the substrate binding site. Residues 39 to 42 (DSMQ) form an interaction with substrate tRNA region.

Belongs to the IPP transferase family. In terms of assembly, monomer. The cofactor is Mg(2+).

The enzyme catalyses adenosine(37) in tRNA + dimethylallyl diphosphate = N(6)-dimethylallyladenosine(37) in tRNA + diphosphate. Catalyzes the transfer of a dimethylallyl group onto the adenine at position 37 in tRNAs that read codons beginning with uridine, leading to the formation of N6-(dimethylallyl)adenosine (i(6)A). The sequence is that of tRNA dimethylallyltransferase from Lactiplantibacillus plantarum (strain ATCC BAA-793 / NCIMB 8826 / WCFS1) (Lactobacillus plantarum).